A 421-amino-acid chain; its full sequence is GTPase Obg (421 aa).

Positions 1 to 158 (MYFIDEAINE…FKIKTELKIL (158 aa)) constitute an Obg domain. Positions 159 to 324 (ADVGLIGYPS…LKYKMLEMIK (166 aa)) constitute an OBG-type G domain. Residues 165 to 172 (GYPSVGKS), 190 to 194 (FTTLK), 211 to 214 (DLPG), 278 to 281 (NKMD), and 305 to 307 (SLL) each bind GTP. Positions 172 and 192 each coordinate Mg(2+). The OCT domain occupies 342 to 421 (TLEEEKPDFV…ICDRVFEFIT (80 aa)).

The protein belongs to the TRAFAC class OBG-HflX-like GTPase superfamily. OBG GTPase family. In terms of assembly, monomer. Mg(2+) serves as cofactor.

Its subcellular location is the cytoplasm. An essential GTPase which binds GTP, GDP and possibly (p)ppGpp with moderate affinity, with high nucleotide exchange rates and a fairly low GTP hydrolysis rate. Plays a role in control of the cell cycle, stress response, ribosome biogenesis and in those bacteria that undergo differentiation, in morphogenesis control. This is GTPase Obg from Phytoplasma mali (strain AT).